Here is a 274-residue protein sequence, read N- to C-terminus: MREGDSNSKKSADVAVLSIILTGSTLTLIYTYKRYLTQFKRTNDIPRRIFRKHWLYGKVTSVGDGDNFHFFHMPGGIRGGWGWLRPVPQMIKNGSTAEKLVGDSRNMRFFNFNWITHGRSTKSKIQKAKSQFLKLNVPYKNRKNLPTIPIRLCGIDAPERAHFGNPAQPFGNEALIWLQNRILGKKVWVKPLSIDQYNRCVARVSYWDWFGGWKDLSLEMLKDGLAVVYEGKVNTEFDDREDKYRYYEFLARSRKKGLWIQNKFETPGEYKKRI.

Residues 15–32 (AVLSIILTGSTLTLIYTY) traverse the membrane as a helical segment. The 209-residue stretch at 53 to 261 (HWLYGKVTSV…RSRKKGLWIQ (209 aa)) folds into the TNase-like domain. Arg151 is an active-site residue. Position 156 (Asp156) interacts with Ca(2+). Active-site residues include Glu159 and Arg199.

The protein belongs to the LCL3 family.

The protein resides in the mitochondrion. The protein localises to the membrane. The chain is Probable endonuclease LCL3 (LCL3) from Saccharomyces cerevisiae (strain Lalvin EC1118 / Prise de mousse) (Baker's yeast).